A 239-amino-acid chain; its full sequence is Skn-1 dependent zygotic transcript 1 protein (239 aa).

Its function is as follows. May have a role in mesendoderm development during embryogenesis. This is Skn-1 dependent zygotic transcript 1 protein from Caenorhabditis briggsae.